A 500-amino-acid polypeptide reads, in one-letter code: Maturase K (500 aa).

The protein belongs to the intron maturase 2 family. MatK subfamily.

The protein resides in the plastid. The protein localises to the chloroplast. Functionally, usually encoded in the trnK tRNA gene intron. Probably assists in splicing its own and other chloroplast group II introns. The polypeptide is Maturase K (Adiantum capillus-veneris (Maidenhair fern)).